Reading from the N-terminus, the 125-residue chain is Ribosome-binding factor A (125 aa).

Belongs to the RbfA family. Monomer. Binds 30S ribosomal subunits, but not 50S ribosomal subunits or 70S ribosomes.

Its subcellular location is the cytoplasm. Its function is as follows. One of several proteins that assist in the late maturation steps of the functional core of the 30S ribosomal subunit. Associates with free 30S ribosomal subunits (but not with 30S subunits that are part of 70S ribosomes or polysomes). Required for efficient processing of 16S rRNA. May interact with the 5'-terminal helix region of 16S rRNA. This is Ribosome-binding factor A from Thermosipho melanesiensis (strain DSM 12029 / CIP 104789 / BI429).